The following is a 540-amino-acid chain: MAKDPGRVLIFDTTLRDGEQSPGASLNLEEKLAIAQQLARLGVDVIEAGFPFASQGDFAAVQRIAQQVGGDEGPIICGLARASRADIKACADAVAPAPRRRIHTFIATSDIHLEHKLRKSRAEVLAIVPEMVAYARSLVDDVEFSCEDAARSDPEFLYEVIEAAIAAGAGTINIPDTVGFTTPSEFGALIAGIDCHVPNMNEAVISVHGHNDLGLAVANFLEAVKSGARQFECTINGIGERAGNAALEELVMALYVRRRYFNPFFGREPDSPTPLTAVRTEEITKTSRLVSNLTGMVVQPNKAIVGSNAFAHESGIHQDGVLKNRLTYEIVDARTVGLSDNRISLGKLSGRSAVRARLEELGYDLTREDLDEAFARFKDLADRKRDITDRDLEAIVSEQVQQSEARFQLRLVQVSCGSSLRPTATVILAQEDGQEQTAAAVGTGPVDAVCRALNALAGEPNELIEFSVKSVTEGIDAMGEVTIRLRRDGQLFSGHSADTDVVVAAAQAFVNALNRLVAGCGRQSLHPQHDAVLADLRSGI.

Residues 8–269 (VLIFDTTLRD…YFNPFFGREP (262 aa)) form the Pyruvate carboxyltransferase domain. Mn(2+) is bound by residues Asp-17, His-208, His-210, and Asn-244. Positions 408–540 (QLRLVQVSCG…AVLADLRSGI (133 aa)) are regulatory domain.

It belongs to the alpha-IPM synthase/homocitrate synthase family. LeuA type 1 subfamily. As to quaternary structure, homodimer. It depends on Mn(2+) as a cofactor.

The protein resides in the cytoplasm. The catalysed reaction is 3-methyl-2-oxobutanoate + acetyl-CoA + H2O = (2S)-2-isopropylmalate + CoA + H(+). It functions in the pathway amino-acid biosynthesis; L-leucine biosynthesis; L-leucine from 3-methyl-2-oxobutanoate: step 1/4. In terms of biological role, catalyzes the condensation of the acetyl group of acetyl-CoA with 3-methyl-2-oxobutanoate (2-ketoisovalerate) to form 3-carboxy-3-hydroxy-4-methylpentanoate (2-isopropylmalate). This Prochlorococcus marinus (strain MIT 9313) protein is 2-isopropylmalate synthase.